The chain runs to 337 residues: Cysteine proteinase 3 (337 aa).

The first 21 residues, 1-21, serve as a signal peptide directing secretion; it reads MRLSITLIFTLIVLSISFISA. Residues 22 to 120 constitute a propeptide, activation peptide; it reads GNVFSHKQYQ…GLRLNRPQFK (99 aa). 3 disulfides stabilise this stretch: Cys-142–Cys-185, Cys-176–Cys-219, and Cys-277–Cys-326. Cys-145 is an active-site residue. Active-site residues include His-284 and Asn-304.

The protein belongs to the peptidase C1 family.

It is found in the lysosome. The chain is Cysteine proteinase 3 (cprC) from Dictyostelium discoideum (Social amoeba).